Reading from the N-terminus, the 547-residue chain is uncharacterized protein (547 aa).

12 helical membrane passes run 33-53, 107-127, 145-165, 203-223, 231-251, 263-283, 298-318, 351-371, 397-417, 432-452, 470-490, and 499-519; these read PTFF…IMVI, PLIV…GVIF, TGLI…LSFA, VYIL…FYLA, FIAI…FLLV, VAGI…LIYL, LNKI…ASFF, TLLT…FGLL, TVII…VAFG, LDLA…VATG, IVSL…FQAI, and VFIW…IAFG.

Its subcellular location is the cell membrane. This is an uncharacterized protein from Mycoplasma genitalium (strain ATCC 33530 / DSM 19775 / NCTC 10195 / G37) (Mycoplasmoides genitalium).